The following is a 78-amino-acid chain: Antimicrobial peptide marcin-18 (78 aa).

A signal peptide spans 1–23 (MQFKKQLMVIFLAYFLVVNESEA). Position 41 is an arginine amide (Arg-41). The propeptide occupies 42–78 (RKNQRSRSIMKRDLENLFDPYQRNLELDRLLKQLPNY).

This sequence belongs to the non-disulfide-bridged peptide (NDBP) superfamily. Medium-length antimicrobial peptide (group 3) family. As to expression, expressed by the venom gland.

The protein resides in the secreted. The protein localises to the target cell membrane. In terms of biological role, antimicrobial peptide with potent activity against bacteria. Acts by fastly disrupting the bacterial membrane. Shows activity against Gram-positive bacteria S.aureus (MIC=1.5-2.9 uM) and S.epidermidis (MIC=2.9 uM), M.luteus (MIC=23.4 uM), B.thuringiensis (MIC=2.9 uM), B.subtilis (MIC=2.9 uM) and Gram-negative bacteria E.coli (MIC=5.9-11.7 uM) and P.aeruginosa (MIC=5.9 uM), as well as against penicillin (MIC=2.9 uM) and methicillin (MIC=1.5-2.9 uM) resistant bacteria. Antibiotic activity is not affected by major negatively charged components of the prokaryotic cell wall (e.g. lipopolysaccharides and lipoteichoic acid). In vivo, in a mouse model of lethal peritonitis, shows potent antibiotic activity without cytotoxicity, improving the survival rate. The chain is Antimicrobial peptide marcin-18 from Olivierus martensii (Manchurian scorpion).